The following is a 121-amino-acid chain: uncharacterized protein (121 aa).

Helical transmembrane passes span 16–36 (GFMV…GFAV) and 74–94 (LYIA…MKTI).

Its subcellular location is the cell membrane. This is an uncharacterized protein from Bacillus subtilis (strain 168).